We begin with the raw amino-acid sequence, 325 residues long: NADH-ubiquinone oxidoreductase chain 1 (325 aa).

The next 8 membrane-spanning stretches (helical) occupy residues 5–25 (VPAEILGIILPLLLGVAFLVL), 68–88 (SANFFLFRMAPVATFMLSLVA), 105–125 (IGLLYLFAISSLGVYGIIIAG), 144–164 (MVSYEVSIGLILITVLICVGS), 177–197 (IWFGIPLFPVLVMFFISCLAE), 227–247 (LFFLGEYANMILMSGLCTLFF), 263–283 (IPGSIWFSIKVLFFLFLYIWV), and 302–322 (VFLPLSLARVVPVSGLLVTFQ).

This sequence belongs to the complex I subunit 1 family. In terms of assembly, complex I is composed of at least 49 different subunits.

The protein localises to the mitochondrion inner membrane. It catalyses the reaction a ubiquinone + NADH + 5 H(+)(in) = a ubiquinol + NAD(+) + 4 H(+)(out). In terms of biological role, core subunit of the mitochondrial membrane respiratory chain NADH dehydrogenase (Complex I) that is believed to belong to the minimal assembly required for catalysis. Complex I functions in the transfer of electrons from NADH to the respiratory chain. The immediate electron acceptor for the enzyme is believed to be ubiquinone. This chain is NADH-ubiquinone oxidoreductase chain 1 (ND1), found in Arabidopsis thaliana (Mouse-ear cress).